We begin with the raw amino-acid sequence, 360 residues long: Hydroxycarboxylic acid receptor 2 (360 aa).

Residues 1-30 lie on the Extracellular side of the membrane; that stretch reads MSKQNHFLVINGKNCCVFRDENIAKVLPPV. The chain crosses the membrane as a helical span at residues 31 to 51; sequence LGLEFVFGLLGNGLALWIFCF. The Cytoplasmic segment spans residues 52–60; sequence HLKSWKSSR. A helical transmembrane segment spans residues 61–81; that stretch reads IFLFNLAVADFLLIICLPFLT. The Extracellular portion of the chain corresponds to 82–98; it reads DNYVQNWDWRFGSIPCR. A disulfide bond links cysteine 97 and cysteine 174. The helical transmembrane segment at 99 to 119 threads the bilayer; it reads VMLFMLAMNRQGSIIFLTVVA. The Cytoplasmic portion of the chain corresponds to 120-140; that stretch reads VDRYFRVVHPHHFLNKISNRT. A helical membrane pass occupies residues 141–161; sequence AAIISCFLWGITIGLTVHLLY. The Extracellular segment spans residues 162 to 189; it reads TDMMTRNGDANLCSSFSICYTFRWHDAM. Residues 190-210 traverse the membrane as a helical segment; the sequence is FLLEFFLPLGIILFCSGRIIW. The Cytoplasmic segment spans residues 211 to 226; it reads SLRQRQMDRHVKIKRA. Residues 227-247 traverse the membrane as a helical segment; sequence INFIMVVAIVFVICFLPSVAV. At 248-270 the chain is on the extracellular side; the sequence is RIRIFWLLYKHNVRNCDIYSSVD. The chain crosses the membrane as a helical span at residues 271–291; sequence LAFFTTLSFTYMNSMLDPVVY. Topologically, residues 292–360 are cytoplasmic; it reads YFSSPSFPNF…SPPYLASTSR (69 aa). Positions 320-360 are disordered; the sequence is NNRSTSVELTGDPSTIRSIPGALMTDPSEPGSPPYLASTSR. A compositionally biased stretch (polar residues) spans 321 to 336; sequence NRSTSVELTGDPSTIR. A Phosphoserine modification is found at serine 325.

Belongs to the G-protein coupled receptor 1 family. In terms of tissue distribution, expressed in adipose tissue, lung and spleen.

It is found in the cell membrane. In terms of biological role, acts as a high affinity receptor for both nicotinic acid (also known as niacin) and (D)-beta-hydroxybutyrate and mediates increased adiponectin secretion and decreased lipolysis through G(i)-protein-mediated inhibition of adenylyl cyclase. This pharmacological effect requires nicotinic acid doses that are much higher than those provided by a normal diet. Mediates nicotinic acid-induced apoptosis in mature neutrophils. Receptor activation by nicotinic acid results in reduced cAMP levels which may affect activity of cAMP-dependent protein kinase A and phosphorylation of target proteins, leading to neutrophil apoptosis. The rank order of potency for the displacement of nicotinic acid binding is 5-methyl pyrazole-3-carboxylic acid = pyridine-3-acetic acid &gt; acifran &gt; 5-methyl nicotinic acid = acipimox &gt;&gt; nicotinuric acid = nicotinamide. The sequence is that of Hydroxycarboxylic acid receptor 2 (Hcar2) from Rattus norvegicus (Rat).